The chain runs to 182 residues: ATP-dependent protease subunit HslV (182 aa).

Residue threonine 10 is part of the active site. Alanine 166, cysteine 169, and serine 172 together coordinate Na(+).

The protein belongs to the peptidase T1B family. HslV subfamily. As to quaternary structure, a double ring-shaped homohexamer of HslV is capped on each side by a ring-shaped HslU homohexamer. The assembly of the HslU/HslV complex is dependent on binding of ATP.

The protein localises to the cytoplasm. It carries out the reaction ATP-dependent cleavage of peptide bonds with broad specificity.. Its activity is regulated as follows. Allosterically activated by HslU binding. Its function is as follows. Protease subunit of a proteasome-like degradation complex believed to be a general protein degrading machinery. The sequence is that of ATP-dependent protease subunit HslV from Rickettsia prowazekii (strain Madrid E).